The following is a 337-amino-acid chain: tRNA-dihydrouridine synthase B (337 aa).

Residues 19–21 (PMA) and Gln73 each bind FMN. The Proton donor role is filled by Cys103. FMN is bound by residues Lys142, 203-205 (NGD), and 227-228 (GR).

The protein belongs to the Dus family. DusB subfamily. FMN serves as cofactor.

The enzyme catalyses a 5,6-dihydrouridine in tRNA + NAD(+) = a uridine in tRNA + NADH + H(+). It catalyses the reaction a 5,6-dihydrouridine in tRNA + NADP(+) = a uridine in tRNA + NADPH + H(+). Functionally, catalyzes the synthesis of 5,6-dihydrouridine (D), a modified base found in the D-loop of most tRNAs, via the reduction of the C5-C6 double bond in target uridines. The polypeptide is tRNA-dihydrouridine synthase B (Pseudomonas syringae pv. tomato (strain ATCC BAA-871 / DC3000)).